Here is a 421-residue protein sequence, read N- to C-terminus: UDP-N-acetylglucosamine 1-carboxyvinyltransferase (421 aa).

22 to 23 (KN) serves as a coordination point for phosphoenolpyruvate. R93 is a binding site for UDP-N-acetyl-alpha-D-glucosamine. C117 serves as the catalytic Proton donor. 2-(S-cysteinyl)pyruvic acid O-phosphothioketal is present on C117. UDP-N-acetyl-alpha-D-glucosamine-binding positions include 122–126 (RPVDL), D308, and L330.

The protein belongs to the EPSP synthase family. MurA subfamily.

The protein resides in the cytoplasm. It carries out the reaction phosphoenolpyruvate + UDP-N-acetyl-alpha-D-glucosamine = UDP-N-acetyl-3-O-(1-carboxyvinyl)-alpha-D-glucosamine + phosphate. It participates in cell wall biogenesis; peptidoglycan biosynthesis. In terms of biological role, cell wall formation. Adds enolpyruvyl to UDP-N-acetylglucosamine. The chain is UDP-N-acetylglucosamine 1-carboxyvinyltransferase from Wolinella succinogenes (strain ATCC 29543 / DSM 1740 / CCUG 13145 / JCM 31913 / LMG 7466 / NCTC 11488 / FDC 602W) (Vibrio succinogenes).